We begin with the raw amino-acid sequence, 341 residues long: N-acetyl-gamma-glutamyl-phosphate reductase (341 aa).

Residue Cys149 is part of the active site.

This sequence belongs to the NAGSA dehydrogenase family. Type 1 subfamily.

The protein resides in the cytoplasm. It carries out the reaction N-acetyl-L-glutamate 5-semialdehyde + phosphate + NADP(+) = N-acetyl-L-glutamyl 5-phosphate + NADPH + H(+). The protein operates within amino-acid biosynthesis; L-arginine biosynthesis; N(2)-acetyl-L-ornithine from L-glutamate: step 3/4. Its function is as follows. Catalyzes the NADPH-dependent reduction of N-acetyl-5-glutamyl phosphate to yield N-acetyl-L-glutamate 5-semialdehyde. In Methanocaldococcus jannaschii (strain ATCC 43067 / DSM 2661 / JAL-1 / JCM 10045 / NBRC 100440) (Methanococcus jannaschii), this protein is N-acetyl-gamma-glutamyl-phosphate reductase.